Consider the following 62-residue polypeptide: Large ribosomal subunit protein eL37 (62 aa).

Residues C20, C23, C35, and C38 each coordinate Zn(2+). The C4-type zinc-finger motif lies at 20–38 (CRRCGRKAFNVKKGYCAAC).

It belongs to the eukaryotic ribosomal protein eL37 family. It depends on Zn(2+) as a cofactor.

Functionally, binds to the 23S rRNA. This chain is Large ribosomal subunit protein eL37 (rpl37e), found in Pyrococcus abyssi (strain GE5 / Orsay).